The chain runs to 334 residues: Porphobilinogen deaminase (334 aa).

Cys255 carries the post-translational modification S-(dipyrrolylmethanemethyl)cysteine.

The protein belongs to the HMBS family. In terms of assembly, monomer. It depends on dipyrromethane as a cofactor.

The catalysed reaction is 4 porphobilinogen + H2O = hydroxymethylbilane + 4 NH4(+). The protein operates within porphyrin-containing compound metabolism; protoporphyrin-IX biosynthesis; coproporphyrinogen-III from 5-aminolevulinate: step 2/4. Functionally, tetrapolymerization of the monopyrrole PBG into the hydroxymethylbilane pre-uroporphyrinogen in several discrete steps. This chain is Porphobilinogen deaminase, found in Burkholderia orbicola (strain MC0-3).